Consider the following 399-residue polypeptide: MKSVEEQLALIKRGAEELLVESELIEKLKRGQPLRIKAGFDPTAPDLHLGHTVLINKLRQFQELGHQVIFLIGDFTGMIGDPSGKSATRPPLTREQVLENAETYKTQVFKILDPAKTEVAFNSTWMDQMGPADFIRLTSQYTVARMLERDDFDKRYTTNQPIAIHEFLYPLVQGYDSVALRADVELGGTDQKFNLLMGRELQRGYGQEAQCILTMPLLEGLDGVKKMSKSLGNYVGIQEAPGVMYSKLVSIPDALMWRYFELLSFRSMDEINAFRADVEAGANPRDIKIKLAEEIVARFHGEEAAANAHRGAGNRMKDGELPDDLPEVELTAAEDMPIAAVLNKAGLVKNSAAARDLLASGGVRVDGEVVDRSFIYVLGATHVCQAGKKAFARITLKSE.

The 'HIGH' region motif lies at 42–51 (PTAPDLHLGH). The short motif at 226–230 (KMSKS) is the 'KMSKS' region element. Lysine 229 lines the ATP pocket. One can recognise an S4 RNA-binding domain in the interval 336–396 (MPIAAVLNKA…GKKAFARITL (61 aa)).

The protein belongs to the class-I aminoacyl-tRNA synthetase family. TyrS type 2 subfamily. As to quaternary structure, homodimer.

It localises to the cytoplasm. The enzyme catalyses tRNA(Tyr) + L-tyrosine + ATP = L-tyrosyl-tRNA(Tyr) + AMP + diphosphate + H(+). Catalyzes the attachment of tyrosine to tRNA(Tyr) in a two-step reaction: tyrosine is first activated by ATP to form Tyr-AMP and then transferred to the acceptor end of tRNA(Tyr). In Pseudomonas fluorescens (strain Pf0-1), this protein is Tyrosine--tRNA ligase.